The following is a 231-amino-acid chain: 2-amino-5-formylamino-6-ribosylaminopyrimidin-4(3H)-one 5'-monophosphate deformylase (231 aa).

Fe cation-binding residues include Glu-29, His-31, Asp-40, and His-110.

This sequence belongs to the creatininase superfamily. FAPy deformylase family. As to quaternary structure, homodimer. It depends on Fe(2+) as a cofactor. Requires Zn(2+) as cofactor.

The enzyme catalyses 2-amino-5-formylamino-6-(5-phospho-D-ribosylamino)pyrimidin-4(3H)-one + H2O = 2,5-diamino-6-(1-D-ribosylamino)pyrimidin-4(3H)-one 5'-phosphate + formate + H(+). It functions in the pathway cofactor biosynthesis; coenzyme F420 biosynthesis. It participates in cofactor biosynthesis; riboflavin biosynthesis. Its function is as follows. Catalyzes the hydrolysis of the formamide of 2-amino-5-formylamino-6-ribosylamino-4(3H)-pyrimidinone 5'-monophosphate (FAPy) to form 2,5-diamino-6-ribosylamino-4(3H)-pyrimidinone 5'-phosphate (APy). In Methanothermobacter marburgensis (strain ATCC BAA-927 / DSM 2133 / JCM 14651 / NBRC 100331 / OCM 82 / Marburg) (Methanobacterium thermoautotrophicum), this protein is 2-amino-5-formylamino-6-ribosylaminopyrimidin-4(3H)-one 5'-monophosphate deformylase.